A 614-amino-acid chain; its full sequence is ETS-related transcription factor Elf-1 (614 aa).

4 positions are modified to phosphoserine: serine 110, serine 163, serine 167, and serine 168. A disordered region spans residues threonine 159–lysine 199. Basic residues predominate over residues lysine 173 to proline 182. Serine 187 carries the post-translational modification Phosphoserine. Threonine 190 is subject to Phosphothreonine. Residues isoleucine 208–lysine 290 constitute a DNA-binding region (ETS). Residues aspartate 303–valine 371 form a disordered region. Residues serine 310–proline 335 are compositionally biased toward low complexity. Residue serine 430 is modified to Phosphoserine.

It belongs to the ETS family. In terms of assembly, binds to the underphosphorylated form of RB. May interact with other transcription factors in order to regulate specific genes. Interacts with RUNX1.

The protein localises to the nucleus. In terms of biological role, transcription factor that activates the LYN and BLK promoters. This is ETS-related transcription factor Elf-1 (ELF1) from Bos taurus (Bovine).